We begin with the raw amino-acid sequence, 236 residues long: Small ribosomal subunit protein uS2c (236 aa).

It belongs to the universal ribosomal protein uS2 family.

Its subcellular location is the plastid. The protein localises to the chloroplast. The sequence is that of Small ribosomal subunit protein uS2c (rps2) from Chloranthus spicatus (Chulantree).